A 335-amino-acid polypeptide reads, in one-letter code: Lipoyl synthase (335 aa).

Positions 1–13 are enriched in polar residues; the sequence is MTIDTNPESSTPS. The segment at 1–29 is disordered; that stretch reads MTIDTNPESSTPSAPAYNPSEKQKGSAKT. The [4Fe-4S] cluster site is built by C75, C80, C86, C101, C105, C108, and S315. In terms of domain architecture, Radical SAM core spans 86-304; the sequence is CFGKGTATFM…EEEAYKMGFA (219 aa).

Belongs to the radical SAM superfamily. Lipoyl synthase family. The cofactor is [4Fe-4S] cluster.

It is found in the cytoplasm. The catalysed reaction is [[Fe-S] cluster scaffold protein carrying a second [4Fe-4S](2+) cluster] + N(6)-octanoyl-L-lysyl-[protein] + 2 oxidized [2Fe-2S]-[ferredoxin] + 2 S-adenosyl-L-methionine + 4 H(+) = [[Fe-S] cluster scaffold protein] + N(6)-[(R)-dihydrolipoyl]-L-lysyl-[protein] + 4 Fe(3+) + 2 hydrogen sulfide + 2 5'-deoxyadenosine + 2 L-methionine + 2 reduced [2Fe-2S]-[ferredoxin]. The protein operates within protein modification; protein lipoylation via endogenous pathway; protein N(6)-(lipoyl)lysine from octanoyl-[acyl-carrier-protein]: step 2/2. Its function is as follows. Catalyzes the radical-mediated insertion of two sulfur atoms into the C-6 and C-8 positions of the octanoyl moiety bound to the lipoyl domains of lipoate-dependent enzymes, thereby converting the octanoylated domains into lipoylated derivatives. In Herminiimonas arsenicoxydans, this protein is Lipoyl synthase.